The chain runs to 511 residues: 2-methylbutanal oxime monooxygenase (511 aa).

Helical transmembrane passes span proline 10–phenylalanine 30 and isoleucine 304–phenylalanine 324. Heme is bound at residue cysteine 451.

It belongs to the cytochrome P450 family. It depends on heme as a cofactor. As to expression, expressed in storage roots, primary roots, petioles and vascular tissues. Expressed in the outer cortex cells, the endodermis and around the xylem, phloem cells and laticifers.

The protein localises to the microsome membrane. It catalyses the reaction (1E,2S)-2-methylbutanal oxime + reduced [NADPH--hemoprotein reductase] + O2 = 2-hydroxy-2-methylbutanenitrile + oxidized [NADPH--hemoprotein reductase] + 2 H2O + H(+). It carries out the reaction (E)-2-methylpropanal oxime + reduced [NADPH--hemoprotein reductase] + O2 = 2-hydroxy-2-methylpropanenitrile + oxidized [NADPH--hemoprotein reductase] + 2 H2O + H(+). Functionally, catalyzes the conversion of (E)-2-methylpropanal oxime (valox) to 2-hydroxy-2-methylpropanenitrile (acetone cyanohydrin) and of (E)-2-methylbutanal oxime (ilox) to 2-hydroxy-2-methylbutyronitrile. The reaction takes place in three steps. First, the oxime is isomerized to the (Z)- isomer, next the (Z)-isomer is dehydrated to the corresponding nitrile, followed by a C-hydroxylation of the nitrile. Can use both aliphatic and aromatic oximes as substrates. The chain is 2-methylbutanal oxime monooxygenase (CYP71E7) from Manihot esculenta (Cassava).